Here is a 262-residue protein sequence, read N- to C-terminus: Aconitate isomerase (262 aa).

Residues 1 to 22 (MFPRLPTLALGALLLASTPLLA) form the signal peptide.

As to quaternary structure, monomer.

It catalyses the reaction trans-aconitate = cis-aconitate. With respect to regulation, activated more than 1.5 fold by Ca(2+), Mg(2+), Mn(2+), Ni(2+), Fe(2+), DDT and 1,10-phenanthroline. Strongly inhibited by Ag(+) and Hg(+). Inhibited by addition of 20% (v/v) glycerol. No effect by addition of NADH or NADPH. Involved in assimilation of trans-aconitic acid. Preference for cis-aconitic acid is 14-fold higher than for trans-aconitic acid. Not active on intermediates of tricarboxylic acid (TCA) cycle including citric acid, succinic acid, fumaric acid, and 2-oxoglutaric acid or on other dicarboxilic acids including itaconic acid, formic acid, citraconic acid or maleic acid. In Pseudomonas sp, this protein is Aconitate isomerase.